We begin with the raw amino-acid sequence, 696 residues long: MDTHGWGSRILVGAALAALTMLGACNGDETAERNQLPVFVSGSVRTTAYDGASDDLLTAGLGKTGLASAAAPAFADPSRPTAAELRRVAIWSNYRALVDMSANGGYGRFWGPNVDLDGNDTLGEGKIAGTEYLAYADDGSGRKNVTLLVQVPASFDPAQPCIVTATSSGSRGVYGAISAAGEWGLKRGCAVAYNDKGGGNGAQELGSNTVTLIDGTLANAVLAGSASLFTANLTSGDLAAFNSRFPNRYAFKHAHSQQNPEHDWGRATLQSVEFAYWALNQQFAPLVDGSHRGVRYRAGDITTIAASVSNGGGAALAAAEQDTRRWITAVVVGEPQINVRMAPNAVVRESGRPVPSFGRPLADYATLANLLEPCAAASASLAGEPYLSALPLATTQSIRTQRCATLAAAGLVSGADTQSQAADALAQLHAAGYLADSDLLQASMWDSQAIPAIAVTYANAYTRSSVADNLCNFSFATTNAATGAVAAPAASPMPAVFGLGNGVPPTAGINLVFNTGAGVDHRLATPDASFAGALCLRQLWTNGMLDMPANVEAVRVNANLQGKPAIIVQGRSDALVPVNHASRAYVAQNSISEGGRSQLVFYEVTNGQHFDAFLPVAGFDTRFVPVHYYNVQALNLMWRHLKSGAPLPPSQVIRTVPRGGTPGAAPALTSANLPPISTAPGANAIAAGAGAIDVPL.

An N-terminal signal peptide occupies residues 1 to 26 (MDTHGWGSRILVGAALAALTMLGACN). The active-site Charge relay system is Ser309.

Belongs to the D-(-)-3-hydroxybutyrate oligomer hydrolase family.

It localises to the secreted. It carries out the reaction (3R)-hydroxybutanoate dimer + H2O = 2 (R)-3-hydroxybutanoate + H(+). It functions in the pathway lipid metabolism; butanoate metabolism. In terms of biological role, participates in the degradation of poly-3-hydroxybutyrate (PHB). It works downstream of poly(3-hydroxybutyrate) depolymerase, hydrolyzing D(-)-3-hydroxybutyrate oligomers of various length (3HB-oligomers) into 3HB-monomers. In Burkholderia vietnamiensis (strain G4 / LMG 22486) (Burkholderia cepacia (strain R1808)), this protein is D-(-)-3-hydroxybutyrate oligomer hydrolase.